The primary structure comprises 254 residues: Ribosomal RNA small subunit methyltransferase J (254 aa).

S-adenosyl-L-methionine is bound by residues 107–108 (RD), 123–124 (ER), and aspartate 177.

It belongs to the methyltransferase superfamily. RsmJ family.

The protein resides in the cytoplasm. It catalyses the reaction guanosine(1516) in 16S rRNA + S-adenosyl-L-methionine = N(2)-methylguanosine(1516) in 16S rRNA + S-adenosyl-L-homocysteine + H(+). In terms of biological role, specifically methylates the guanosine in position 1516 of 16S rRNA. In Histophilus somni (strain 129Pt) (Haemophilus somnus), this protein is Ribosomal RNA small subunit methyltransferase J.